The sequence spans 406 residues: Cysteine desulfurase (406 aa).

An N6-(pyridoxal phosphate)lysine modification is found at K226. C364 serves as the catalytic Cysteine persulfide intermediate.

It belongs to the class-V pyridoxal-phosphate-dependent aminotransferase family. Csd subfamily. In terms of assembly, homodimer. Interacts with SufE and the SufBCD complex composed of SufB, SufC and SufD. The interaction with SufE is required to mediate the direct transfer of the sulfur atom from the S-sulfanylcysteine. Pyridoxal 5'-phosphate is required as a cofactor.

The protein localises to the cytoplasm. The enzyme catalyses (sulfur carrier)-H + L-cysteine = (sulfur carrier)-SH + L-alanine. The catalysed reaction is L-selenocysteine + AH2 = hydrogenselenide + L-alanine + A + H(+). It functions in the pathway cofactor biosynthesis; iron-sulfur cluster biosynthesis. Cysteine desulfurases mobilize the sulfur from L-cysteine to yield L-alanine, an essential step in sulfur metabolism for biosynthesis of a variety of sulfur-containing biomolecules. Component of the suf operon, which is activated and required under specific conditions such as oxidative stress and iron limitation. Acts as a potent selenocysteine lyase in vitro, that mobilizes selenium from L-selenocysteine. Selenocysteine lyase activity is however unsure in vivo. The polypeptide is Cysteine desulfurase (Yersinia pestis bv. Antiqua (strain Angola)).